A 173-amino-acid chain; its full sequence is Putative metal-dependent hydrolase OB0413 (173 aa).

Zn(2+) is bound by residues His-64, His-155, and His-159.

This sequence belongs to the metal hydrolase YfiT family. In terms of assembly, homodimer. Zn(2+) serves as cofactor.

The protein resides in the cytoplasm. In terms of biological role, possible metal-dependent hydrolase. This Oceanobacillus iheyensis (strain DSM 14371 / CIP 107618 / JCM 11309 / KCTC 3954 / HTE831) protein is Putative metal-dependent hydrolase OB0413.